Reading from the N-terminus, the 99-residue chain is SAGA-associated factor 11 (99 aa).

An SGF11-type zinc finger spans residues 71–92 (FYCENCGREVSGNRFAAHLQRC).

Belongs to the SGF11 family. In terms of assembly, component of the 1.8 MDa SAGA transcription coactivator-HAT complex. SAGA is built of 5 distinct domains with specialized functions. Within the SAGA complex, SUS1, SGF11, SGF73 and UBP8 form an additional subcomplex of SAGA called the DUB module (deubiquitination module). Interacts directly with SGF73, SUS1 and UBP8.

It is found in the nucleus. In terms of biological role, functions as a component of the transcription regulatory histone acetylation (HAT) complex SAGA. At the promoters, SAGA is required for recruitment of the basal transcription machinery. It influences RNA polymerase II transcriptional activity through different activities such as TBP interaction and promoter selectivity, interaction with transcription activators, and chromatin modification through histone acetylation and deubiquitination. SAGA acetylates nucleosomal histone H3 to some extent (to form H3K9ac, H3K14ac, H3K18ac and H3K23ac). SAGA interacts with DNA via upstream activating sequences (UASs). Involved in transcriptional regulation of a subset of SAGA-regulated genes. Within the SAGA complex, participates in a subcomplex, that specifically deubiquitinates histones H2B. The protein is SAGA-associated factor 11 of Candida glabrata (strain ATCC 2001 / BCRC 20586 / JCM 3761 / NBRC 0622 / NRRL Y-65 / CBS 138) (Yeast).